Here is a 135-residue protein sequence, read N- to C-terminus: ATP synthase epsilon chain (135 aa).

It belongs to the ATPase epsilon chain family. As to quaternary structure, F-type ATPases have 2 components, CF(1) - the catalytic core - and CF(0) - the membrane proton channel. CF(1) has five subunits: alpha(3), beta(3), gamma(1), delta(1), epsilon(1). CF(0) has three main subunits: a, b and c.

Its subcellular location is the cellular thylakoid membrane. Functionally, produces ATP from ADP in the presence of a proton gradient across the membrane. The polypeptide is ATP synthase epsilon chain (Prochlorococcus marinus (strain MIT 9211)).